The chain runs to 120 residues: Chaperonin GroEL (120 aa).

23 to 27 (DGTTT) contacts ATP.

This sequence belongs to the chaperonin (HSP60) family. As to quaternary structure, forms a cylinder of 14 subunits composed of two heptameric rings stacked back-to-back. Interacts with the co-chaperonin GroES.

The protein resides in the cytoplasm. It catalyses the reaction ATP + H2O + a folded polypeptide = ADP + phosphate + an unfolded polypeptide.. Its function is as follows. Together with its co-chaperonin GroES, plays an essential role in assisting protein folding. The GroEL-GroES system forms a nano-cage that allows encapsulation of the non-native substrate proteins and provides a physical environment optimized to promote and accelerate protein folding. The sequence is that of Chaperonin GroEL from Mycobacterium kansasii.